The following is a 179-amino-acid chain: tRNA (cytidine(56)-2'-O)-methyltransferase (179 aa).

S-adenosyl-L-methionine-binding positions include Leu-82, 112 to 116 (GAEKV), and 130 to 137 (VGNQPHSE).

Belongs to the aTrm56 family. In terms of assembly, homodimer.

It localises to the cytoplasm. The enzyme catalyses cytidine(56) in tRNA + S-adenosyl-L-methionine = 2'-O-methylcytidine(56) in tRNA + S-adenosyl-L-homocysteine + H(+). Specifically catalyzes the AdoMet-dependent 2'-O-ribose methylation of cytidine at position 56 in tRNAs. The sequence is that of tRNA (cytidine(56)-2'-O)-methyltransferase from Methanococcus maripaludis (strain C5 / ATCC BAA-1333).